The following is a 525-amino-acid chain: M-phase inducer phosphatase 1 (525 aa).

The Phosphodegron signature appears at 73 to 83 (MGSSESTDSGF). The residue at position 75 (serine 75) is a Phosphoserine; by CHEK1. 3 positions are modified to phosphoserine; by NEK11: serine 78, serine 81, and serine 87. Serine 106 is modified (phosphoserine). Residue serine 123 is modified to Phosphoserine; by CHEK1 and CHEK2. The short motif at 140 to 142 (KEN) is the KEN box element. Serine 177 carries the phosphoserine; by CHEK1 modification. Disordered stretches follow at residues 179–204 (PARMLSSNERDGNEPGNSIPFMPQSP) and 262–308 (SASC…PEKP). A phosphoserine; by CHEK1 and CHEK2 mark is found at serine 279 and serine 293. Over residues 294–306 (VAGASPEEAASPE) the composition is skewed to low complexity. Residue serine 322 is modified to Phosphoserine. In terms of domain architecture, Rhodanese spans 377–483 (LIKEFVIIDC…FFLKCQSHCE (107 aa)). Cysteine 432 is a catalytic residue. Residue threonine 508 is modified to Phosphothreonine; by CHEK1. Residues serine 514 and serine 520 each carry the phosphoserine; by PLK3 modification.

The protein belongs to the MPI phosphatase family. As to quaternary structure, interacts with CCNB1/cyclin B1. Interacts with YWHAE/14-3-3 epsilon when phosphorylated. Interacts with CUL1 specifically when CUL1 is neddylated and active. Interacts with BTRC/BTRCP1 and FBXW11/BTRCP2. Interactions with CUL1, BTRC and FBXW11 are enhanced upon DNA damage. Interacts with HSP90AB1; prevents heat shock-mediated CDC25A degradation and contributes to cell cycle progression. Phosphorylated by CHEK1 on Ser-75, Ser-123, Ser-177, Ser-279, Ser-293 and Thr-508 during checkpoint mediated cell cycle arrest. Also phosphorylated by CHEK2 on Ser-123, Ser-279, and Ser-293 during checkpoint mediated cell cycle arrest. Phosphorylation on Ser-177 and Thr-508 creates binding sites for YWHAE/14-3-3 epsilon which inhibits CDC25A. Phosphorylation on Ser-75, Ser-123, Ser-177, Ser-279 and Ser-293 may also promote ubiquitin-dependent proteolysis of CDC25A by the SCF complex. Phosphorylation of CDC25A at Ser-75 by CHEK1 primes it for subsequent phosphorylation at Ser-78, Ser-81 and Ser-87 by NEK11. Phosphorylation by NEK11 is required for BTRC-mediated polyubiquitination and degradation. Phosphorylation by PIM1 leads to an increase in phosphatase activity. Phosphorylated by PLK3 following DNA damage, leading to promote its ubiquitination and degradation. In terms of processing, ubiquitinated by the anaphase promoting complex/cyclosome (APC/C) ubiquitin ligase complex that contains FZR1/CDH1 during G1 phase leading to its degradation by the proteasome. Ubiquitinated by a SCF complex containing BTRC and FBXW11 during S phase leading to its degradation by the proteasome. Deubiquitination by USP17L2/DUB3 leads to its stabilization.

The catalysed reaction is O-phospho-L-tyrosyl-[protein] + H2O = L-tyrosyl-[protein] + phosphate. Its activity is regulated as follows. Stimulated by B-type cyclins. Stimulated by PIM1-mediated phosphorylation. Functionally, tyrosine protein phosphatase which functions as a dosage-dependent inducer of mitotic progression. Directly dephosphorylates CDK1 and stimulates its kinase activity. Also dephosphorylates CDK2 in complex with cyclin-E, in vitro. The sequence is that of M-phase inducer phosphatase 1 (CDC25A) from Bos taurus (Bovine).